The primary structure comprises 244 residues: Gasdermin-like protein rcd-1-2 (244 aa).

The tract at residues 1–22 is disordered; the sequence is MDNEEWFPLKQTHYPPPTIPSM.

Belongs to the gasdermin family. In terms of assembly, heterooligomer; the heterooligomer with rcd-1-1 forms a ring-shaped pore complex when inserted in the membrane.

It is found in the cytoplasm. Its subcellular location is the cell membrane. Functionally, gasdermin-like protein involved in heterokaryon incompatibility, a process that ensures that during spontaneous vegetative cell fusion, only compatible cells from the same colony survive (non-self-recognition). In N.crassa, the rcd-1 locus exists as 2 incompatible alleles, rcd-1-1 (AC Q7SBA0) and rcd-1-2 (this entry). During the allorecognition process, forms a heterooligomer with rcd-1-1, thereby forming a functional gasdermin-like complex that binds to membranes and forms pores, triggering cell death. Binds negatively charged phospholipids, such as cardiolipin and phosphatidylserine. Also binds to phosphoinositides, preferentially to phosphatidylinositol-3-phosphate (PtdIns-3-P), PtdIns-5-P and PtdIns-3,5-P2. The polypeptide is Gasdermin-like protein rcd-1-2 (Neurospora crassa).